The primary structure comprises 526 residues: Amino acid transporter AVT1E (526 aa).

The tract at residues 1–49 (MKQNETFDQEREDLYHTFDEEDEESQTESSVPSTPLSRNRSEDVPVPWP) is disordered. Positions 8-18 (DQEREDLYHTF) are enriched in basic and acidic residues. 11 helical membrane-spanning segments follow: residues 140-160 (SVLN…PYAV), 165-185 (WLGL…GILL), 212-232 (ILVS…YIIM), 253-273 (LDST…TVWL), 278-298 (LLSY…LCLF), 320-340 (IPVA…FPNI), 353-373 (VLLI…VCGF), 397-417 (IAVW…ITPV), 436-456 (GVSM…ALTV), 458-478 (FFAT…ALIF), and 494-514 (FQIG…CCGT).

This sequence belongs to the amino acid/polyamine transporter 2 family. Amino acid/auxin permease (AAAP) (TC 2.A.18.5) subfamily.

It localises to the membrane. The chain is Amino acid transporter AVT1E from Arabidopsis thaliana (Mouse-ear cress).